A 381-amino-acid polypeptide reads, in one-letter code: Protein TRIGALACTOSYLDIACYLGLYCEROL 2, chloroplastic (381 aa).

The N-terminal 45 residues, 1 to 45 (MIGNPVIQVPSSLMPSSSMIACPRVSPNGVPYLPPKPRTRHLVVR), are a transit peptide targeting the chloroplast. The Stromal segment spans residues 46-96 (AASNSDAAHGQPSSDGGKNPLTVVLDVPRNIWRQTLKPLSDFGFGKRSIWE). The chain crosses the membrane as a helical span at residues 97-117 (GGVGLFIVSGATLLALSWAWL). Residues 118-381 (RGFQMRSKFR…LLIKSLSRLL (264 aa)) are Chloroplast intermembrane-facing.

As to quaternary structure, homomultimer. Substrate-binding subunit of the TGD complex, a lipid translocator at the inner chloroplast envelope membrane made of TGD1, TGD2 and TGD3. Interacts with TGD1 and TGD3 with an overall subunit stoichiometry of 2 TGD1, 2 TGD3 and 8 to 12 TGD2. Interacts with TGD5.

The protein localises to the plastid. The protein resides in the chloroplast inner membrane. Functionally, component of a phosphatidic acid/lipid transport complex in the chloroplast envelope. Specifically binds phosphatidic acid (PA). Involved in lipid transfer from the endoplasmic reticulum (ER) to plastids, and necessary for thylakoids formation. This chain is Protein TRIGALACTOSYLDIACYLGLYCEROL 2, chloroplastic, found in Arabidopsis thaliana (Mouse-ear cress).